Consider the following 382-residue polypeptide: Succinate--CoA ligase [ADP-forming] subunit beta (382 aa).

The ATP-grasp domain maps to 9–240 (KELFSKYGVK…PRDVSEFEMY (232 aa)). Residues lysine 45, 52–54 (GRG), valine 94, and glutamate 99 contribute to the ATP site. Mg(2+) is bound by residues asparagine 193 and aspartate 207. Residues asparagine 260 and 317 to 319 (GIT) contribute to the substrate site.

This sequence belongs to the succinate/malate CoA ligase beta subunit family. Heterotetramer of two alpha and two beta subunits. It depends on Mg(2+) as a cofactor.

It catalyses the reaction succinate + ATP + CoA = succinyl-CoA + ADP + phosphate. The enzyme catalyses GTP + succinate + CoA = succinyl-CoA + GDP + phosphate. The protein operates within carbohydrate metabolism; tricarboxylic acid cycle; succinate from succinyl-CoA (ligase route): step 1/1. Its function is as follows. Succinyl-CoA synthetase functions in the citric acid cycle (TCA), coupling the hydrolysis of succinyl-CoA to the synthesis of either ATP or GTP and thus represents the only step of substrate-level phosphorylation in the TCA. The beta subunit provides nucleotide specificity of the enzyme and binds the substrate succinate, while the binding sites for coenzyme A and phosphate are found in the alpha subunit. The protein is Succinate--CoA ligase [ADP-forming] subunit beta of Pyrobaculum arsenaticum (strain DSM 13514 / JCM 11321 / PZ6).